The chain runs to 1209 residues: DNA-directed RNA polymerase subunit beta' (1209 aa).

The Zn(2+) site is built by Cys60, Cys62, Cys75, and Cys78. Mg(2+) contacts are provided by Asp450, Asp452, and Asp454. Zn(2+)-binding residues include Cys819, Cys893, Cys900, and Cys903.

It belongs to the RNA polymerase beta' chain family. The RNAP catalytic core consists of 2 alpha, 1 beta, 1 beta' and 1 omega subunit. When a sigma factor is associated with the core the holoenzyme is formed, which can initiate transcription. Requires Mg(2+) as cofactor. The cofactor is Zn(2+).

It catalyses the reaction RNA(n) + a ribonucleoside 5'-triphosphate = RNA(n+1) + diphosphate. Its function is as follows. DNA-dependent RNA polymerase catalyzes the transcription of DNA into RNA using the four ribonucleoside triphosphates as substrates. This chain is DNA-directed RNA polymerase subunit beta', found in Streptococcus mutans serotype c (strain ATCC 700610 / UA159).